The chain runs to 357 residues: MGGAVSAGEDNDDLIDNLKEAQYIRTERVEQAFRAIDRGDYYLEGYRDNAYKDLAWKHGNIHLSAPCIYSEVMEALKLQPGLSFLNLGSGTGYLSTMVGLILGPFGINHGIELHSDVVEYAKEKLESFIKNSDSFDKFEFCEPAFVVGNCLQIASDSHQYDRIYCGAGVQKDHENYMKILLKVGGILVMPIEDQLTQIMRTGQNTWESKNILAVSFAPLVQPSKNDNGKPDSVGLPPCAVRNLQDLARIYIRRTLRNFINDEMQAKGIPQRAPPKRKRKRVKQRINTYVFVGNQLIPQPLDSEEDEKMEEDNKEEEEKDHNEAMKPEEPPQNLLREKIMKLPLPESLKAYLTYFRDK.

The N-myristoyl glycine moiety is linked to residue Gly-2. Residue Ser-64 is part of the active site. AdoMet binding motif regions lie at residues 85-94 (LNLGSGTGYL), 160-164 (YDRIY), and 181-191 (LKVGGILVMPI). A BC-box region spans residues 240-250 (VRNLQDLARIY). Residues 299–333 (PLDSEEDEKMEEDNKEEEEKDHNEAMKPEEPPQNL) are disordered. The span at 301–317 (DSEEDEKMEEDNKEEEE) shows a compositional bias: acidic residues. Residues 318–333 (KDHNEAMKPEEPPQNL) show a composition bias toward basic and acidic residues. The CUL-box stretch occupies residues 341 to 344 (LPLP).

This sequence belongs to the methyltransferase superfamily. L-isoaspartyl/D-aspartyl protein methyltransferase family. Component of the probable ECS(PCMTD1) E3 ubiquitin-protein ligase complex, at least composed of CUL5, ELOB, ELOC, RBX2 and PCMTD1. Interacts (via the BC-box) with ELOB and ELOC; the interaction is direct and stabilizes PCMTD1.

The protein localises to the cytoplasm. It is found in the membrane. Its function is as follows. Substrate recognition component of an ECS (Elongin BC-CUL5-SOCS-box protein) E3 ubiquitin ligase complex which mediates the ubiquitination and subsequent proteasomal degradation of target proteins. Specifically binds to the methyltransferase cofactor S-adenosylmethionine (AdoMet) via the N-terminal AdoMet binding motif, but does not display methyltransferase activity. May provide an alternate maintenance pathway for modified proteins by acting as a damage-specific E3 ubiquitin ligase adaptor protein. In Homo sapiens (Human), this protein is Protein-L-isoaspartate O-methyltransferase domain-containing protein 1.